We begin with the raw amino-acid sequence, 277 residues long: 2,3,4,5-tetrahydropyridine-2,6-dicarboxylate N-succinyltransferase (277 aa).

The substrate site is built by R106 and D143.

It belongs to the transferase hexapeptide repeat family. Homotrimer.

Its subcellular location is the cytoplasm. The catalysed reaction is (S)-2,3,4,5-tetrahydrodipicolinate + succinyl-CoA + H2O = (S)-2-succinylamino-6-oxoheptanedioate + CoA. The protein operates within amino-acid biosynthesis; L-lysine biosynthesis via DAP pathway; LL-2,6-diaminopimelate from (S)-tetrahydrodipicolinate (succinylase route): step 1/3. This Xylella fastidiosa (strain 9a5c) protein is 2,3,4,5-tetrahydropyridine-2,6-dicarboxylate N-succinyltransferase.